The following is a 488-amino-acid chain: NAD-reducing hydrogenase HoxS subunit beta (488 aa).

Residues Cys-62, Cys-65, Cys-458, and Cys-461 each coordinate Ni(2+).

This sequence belongs to the [NiFe]/[NiFeSe] hydrogenase large subunit family. Tetramer of an alpha and a gamma subunits (flavin-containing dimer), and a delta and a nickel-containing beta subunits (hydrogenase dimer). The cofactor is FMN. Ni(2+) serves as cofactor.

Its subcellular location is the cytoplasm. It catalyses the reaction H2 + NAD(+) = NADH + H(+). The polypeptide is NAD-reducing hydrogenase HoxS subunit beta (hoxH) (Cupriavidus necator (strain ATCC 17699 / DSM 428 / KCTC 22496 / NCIMB 10442 / H16 / Stanier 337) (Ralstonia eutropha)).